The following is a 639-amino-acid chain: CREB3 regulatory factor (639 aa).

Residues 302–422 are disordered; that stretch reads PLPQEGPGSL…SVEDLKEVTS (121 aa). Residues 310–328 are compositionally biased toward low complexity; the sequence is SLAAGESSSLSASTSVSDS. Over residues 339–351 the composition is skewed to polar residues; that stretch reads LFVSDNLGEQPTK. The segment covering 355-370 has biased composition (acidic residues); sequence EEDEEDEEDVDDEDHD. Residues 371 to 380 are compositionally biased toward basic and acidic residues; sequence EGFGSEHELS. Positions 381 to 401 are enriched in acidic residues; that stretch reads ENEEEEEEEEDYEDDKDDDIS. One can recognise a bZIP domain in the interval 521–584; that stretch reads TARPRSRKEK…VNRVQNPRDE (64 aa). Positions 523-532 are basic motif; it reads RPRSRKEKNK. Positions 533–540 are leucine-zipper; that stretch reads LASRACRL.

It belongs to the bZIP family. CREBRF subfamily. In terms of assembly, interacts (via leucine-zipper domain) with CREB3 (via leucine-zipper domain); the interaction promotes CREB3 degradation. In terms of processing, probably degraded by the proteasome.

It is found in the nucleus. Its function is as follows. Acts as a negative regulator of the endoplasmic reticulum stress response or unfolded protein response (UPR). Represses the transcriptional activity of CREB3 during the UPR. Recruits CREB3 into nuclear foci. The chain is CREB3 regulatory factor (CREBRF) from Homo sapiens (Human).